Reading from the N-terminus, the 156-residue chain is Small ribosomal subunit protein uS7 (156 aa).

This sequence belongs to the universal ribosomal protein uS7 family. As to quaternary structure, part of the 30S ribosomal subunit. Contacts proteins S9 and S11.

Functionally, one of the primary rRNA binding proteins, it binds directly to 16S rRNA where it nucleates assembly of the head domain of the 30S subunit. Is located at the subunit interface close to the decoding center, probably blocks exit of the E-site tRNA. This Leuconostoc citreum (strain KM20) protein is Small ribosomal subunit protein uS7.